The primary structure comprises 439 residues: UPF0229 protein Nham_0975 (439 aa).

The tract at residues 39–106 is disordered; it reads RSGRISDADG…AGTPDPSMKD (68 aa). Over residues 58-76 the composition is skewed to basic and acidic residues; sequence STDEPRFEAAKDSGRREHV.

The protein belongs to the UPF0229 family.

In Nitrobacter hamburgensis (strain DSM 10229 / NCIMB 13809 / X14), this protein is UPF0229 protein Nham_0975.